The chain runs to 902 residues: Probable leucine--tRNA ligase, mitochondrial (902 aa).

K67 is modified (N6-acetyllysine). Positions 91–101 (YPSGKLHMGHV) match the 'HIGH' region motif. K235 bears the N6-acetyllysine mark. The short motif at 638-642 (KMSKS) is the 'KMSKS' region element. K641 is a binding site for ATP.

The protein belongs to the class-I aminoacyl-tRNA synthetase family.

It localises to the mitochondrion matrix. The catalysed reaction is tRNA(Leu) + L-leucine + ATP = L-leucyl-tRNA(Leu) + AMP + diphosphate. This chain is Probable leucine--tRNA ligase, mitochondrial (Lars2), found in Mus musculus (Mouse).